We begin with the raw amino-acid sequence, 325 residues long: MTAHWKENHKNLMLFSGRAHPELAEAVARDLEVEVTPMTARDFANGEIYVRFEESVRGSDCFVIQSHTQPLNKWLMEQLLMIDALKRGSAKRITAILPFYPYARQDKKHRGREPISARLIADLLQTAGADRIVSVDLHTDQIQGFFDGPVDHMHAMPILTDYIKDKYDLSNIVVVSPDAGRVKVAEKWANTLGDAPMAFVHKTRSTEVANEVVANRVVGDVAGKDCVLLDDMIDTGGTIAGAVGVLKEAGARSVVIACTHGVFSDPARERLSSCGAEEVITTDTLPQSTEGWSNLTVLPIAPLLARTISEIFENGSVTTLFEGDA.

ATP-binding positions include 45 to 47 (NGE) and 104 to 105 (RQ). Residues His138 and Asp178 each coordinate Mg(2+). The active site involves Lys202. D-ribose 5-phosphate is bound by residues Arg204, Asp230, and 234–238 (DTGGT).

This sequence belongs to the ribose-phosphate pyrophosphokinase family. Class I subfamily. As to quaternary structure, homohexamer. Requires Mg(2+) as cofactor.

The protein localises to the cytoplasm. The enzyme catalyses D-ribose 5-phosphate + ATP = 5-phospho-alpha-D-ribose 1-diphosphate + AMP + H(+). It participates in metabolic intermediate biosynthesis; 5-phospho-alpha-D-ribose 1-diphosphate biosynthesis; 5-phospho-alpha-D-ribose 1-diphosphate from D-ribose 5-phosphate (route I): step 1/1. In terms of biological role, involved in the biosynthesis of the central metabolite phospho-alpha-D-ribosyl-1-pyrophosphate (PRPP) via the transfer of pyrophosphoryl group from ATP to 1-hydroxyl of ribose-5-phosphate (Rib-5-P). The polypeptide is Ribose-phosphate pyrophosphokinase (Corynebacterium efficiens (strain DSM 44549 / YS-314 / AJ 12310 / JCM 11189 / NBRC 100395)).